A 217-amino-acid polypeptide reads, in one-letter code: tRNA (guanine-N(7)-)-methyltransferase (217 aa).

S-adenosyl-L-methionine contacts are provided by Glu-48, Glu-73, Asn-100, and Asp-123. Asp-123 is an active-site residue. The substrate site is built by Lys-127 and Asp-159.

This sequence belongs to the class I-like SAM-binding methyltransferase superfamily. TrmB family.

The enzyme catalyses guanosine(46) in tRNA + S-adenosyl-L-methionine = N(7)-methylguanosine(46) in tRNA + S-adenosyl-L-homocysteine. It functions in the pathway tRNA modification; N(7)-methylguanine-tRNA biosynthesis. In terms of biological role, catalyzes the formation of N(7)-methylguanine at position 46 (m7G46) in tRNA. The protein is tRNA (guanine-N(7)-)-methyltransferase of Leptospira interrogans serogroup Icterohaemorrhagiae serovar Lai (strain 56601).